A 163-amino-acid chain; its full sequence is Olfactory marker protein (163 aa).

At A2 the chain carries N-acetylalanine.

Belongs to the olfactory marker protein family. As to quaternary structure, interacts with BEX1 and BEX2. As to expression, uniquely associated with mature olfactory receptor neurons.

Its subcellular location is the cytoplasm. Its function is as follows. May act as a modulator of the olfactory signal-transduction cascade. This chain is Olfactory marker protein (Omp), found in Rattus norvegicus (Rat).